The chain runs to 466 residues: 3-isopropylmalate dehydratase large subunit (466 aa).

[4Fe-4S] cluster contacts are provided by Cys-347, Cys-407, and Cys-410.

Belongs to the aconitase/IPM isomerase family. LeuC type 1 subfamily. In terms of assembly, heterodimer of LeuC and LeuD. [4Fe-4S] cluster serves as cofactor.

The catalysed reaction is (2R,3S)-3-isopropylmalate = (2S)-2-isopropylmalate. It participates in amino-acid biosynthesis; L-leucine biosynthesis; L-leucine from 3-methyl-2-oxobutanoate: step 2/4. Catalyzes the isomerization between 2-isopropylmalate and 3-isopropylmalate, via the formation of 2-isopropylmaleate. This chain is 3-isopropylmalate dehydratase large subunit, found in Shewanella woodyi (strain ATCC 51908 / MS32).